The primary structure comprises 425 residues: Probable sucrose-phosphatase 3a (425 aa).

The protein belongs to the sucrose phosphatase family. In terms of assembly, homodimer. Mg(2+) serves as cofactor.

It carries out the reaction sucrose 6(F)-phosphate + H2O = sucrose + phosphate. Its pathway is glycan biosynthesis; sucrose biosynthesis; sucrose from D-fructose 6-phosphate and UDP-alpha-D-glucose: step 2/2. Catalyzes the final step of sucrose synthesis. The chain is Probable sucrose-phosphatase 3a (SPP3A) from Arabidopsis thaliana (Mouse-ear cress).